The following is a 428-amino-acid chain: Dihydrolipoyllysine-residue acetyltransferase component of pyruvate dehydrogenase complex (428 aa).

Residues 2 to 77 (AFEFKLPDIG…TVGQTLITLD (76 aa)) form the Lipoyl-binding domain. N6-lipoyllysine is present on lysine 43. Residues 88 to 123 (GQEQEEAKKEEKTETVSKEEKVDAVAPNAPAAEAEA) form a disordered region. Over residues 89–110 (QEQEEAKKEEKTETVSKEEKVD) the composition is skewed to basic and acidic residues. Residues 111 to 123 (AVAPNAPAAEAEA) are compositionally biased toward low complexity. The region spanning 130–167 (IAMPSVRKYAREKGVDIRLVQGTGKNGRVLKEDIDAFL) is the Peripheral subunit-binding (PSBD) domain. Residues 177–194 (AAEEKAAPAAAKPATTEG) show a composition bias toward low complexity. The interval 177 to 201 (AAEEKAAPAAAKPATTEGEFPETRE) is disordered. Histidine 399 is a catalytic residue.

It belongs to the 2-oxoacid dehydrogenase family. As to quaternary structure, forms a 60-polypeptide structural core with icosahedral symmetry. It depends on (R)-lipoate as a cofactor.

The enzyme catalyses N(6)-[(R)-dihydrolipoyl]-L-lysyl-[protein] + acetyl-CoA = N(6)-[(R)-S(8)-acetyldihydrolipoyl]-L-lysyl-[protein] + CoA. In terms of biological role, the pyruvate dehydrogenase complex catalyzes the overall conversion of pyruvate to acetyl-CoA and CO(2). It contains multiple copies of three enzymatic components: pyruvate dehydrogenase (E1), dihydrolipoamide acetyltransferase (E2) and lipoamide dehydrogenase (E3). The polypeptide is Dihydrolipoyllysine-residue acetyltransferase component of pyruvate dehydrogenase complex (pdhC) (Geobacillus stearothermophilus (Bacillus stearothermophilus)).